The chain runs to 453 residues: T-box transcription factor T homolog (453 aa).

Residues 47 to 217 constitute a DNA-binding region (T-box); the sequence is LWRRFSKLTN…YNPFAKAFLD (171 aa). The segment at 283 to 304 is disordered; it reads RSHRSTPYPPPPYEQKYSPTSA.

Its subcellular location is the nucleus. In terms of biological role, may be involved in the transcriptional regulation of genes required for gastrulation. The chain is T-box transcription factor T homolog from Patiria pectinifera (Starfish).